Consider the following 152-residue polypeptide: Diamine acetyltransferase (152 aa).

In terms of domain architecture, N-acetyltransferase spans 5–152; sequence FEVRKATIDD…SFLDLTPKSD (148 aa). Y127 (proton donor) is an active-site residue.

The protein belongs to the acetyltransferase family. Homotetramer.

It localises to the cytoplasm. The catalysed reaction is an alkane-alpha,omega-diamine + acetyl-CoA = an N-acetylalkane-alpha,omega-diamine + CoA + H(+). It participates in amine and polyamine degradation; putrescine degradation; N-acetylputrescine from putrescine: step 1/1. Functionally, enzyme which catalyzes the acetylation of polyamines. Displays higher substrate specificity for spermine than for spermidine. May function to acetylate host-derived polyamines, thus alleviating the necessity for de novo synthesis of these molecules. This is Diamine acetyltransferase from Cryptosporidium parvum (strain Iowa II).